A 376-amino-acid polypeptide reads, in one-letter code: Chaperone protein DnaJ (376 aa).

Positions 5-70 constitute a J domain; it reads DFYEVLGVER…SKRAAYDQYG (66 aa). The segment at 135 to 213 adopts a CR-type zinc-finger fold; that stretch reads GTTVTIRVPT…CHGQGRVEEQ (79 aa). 8 residues coordinate Zn(2+): Cys148, Cys151, Cys165, Cys168, Cys187, Cys190, Cys201, and Cys204. 4 CXXCXGXG motif repeats span residues 148–155, 165–172, 187–194, and 201–208; these read CKTCDGSG, CTTCGGIG, CPRCHGSG, and CGSCHGQG.

It belongs to the DnaJ family. As to quaternary structure, homodimer. Zn(2+) serves as cofactor.

It localises to the cytoplasm. Functionally, participates actively in the response to hyperosmotic and heat shock by preventing the aggregation of stress-denatured proteins and by disaggregating proteins, also in an autonomous, DnaK-independent fashion. Unfolded proteins bind initially to DnaJ; upon interaction with the DnaJ-bound protein, DnaK hydrolyzes its bound ATP, resulting in the formation of a stable complex. GrpE releases ADP from DnaK; ATP binding to DnaK triggers the release of the substrate protein, thus completing the reaction cycle. Several rounds of ATP-dependent interactions between DnaJ, DnaK and GrpE are required for fully efficient folding. Also involved, together with DnaK and GrpE, in the DNA replication of plasmids through activation of initiation proteins. In Stutzerimonas stutzeri (Pseudomonas stutzeri), this protein is Chaperone protein DnaJ.